We begin with the raw amino-acid sequence, 173 residues long: Adenine phosphoribosyltransferase (173 aa).

This sequence belongs to the purine/pyrimidine phosphoribosyltransferase family. In terms of assembly, homodimer.

The protein resides in the cytoplasm. The enzyme catalyses AMP + diphosphate = 5-phospho-alpha-D-ribose 1-diphosphate + adenine. It functions in the pathway purine metabolism; AMP biosynthesis via salvage pathway; AMP from adenine: step 1/1. Functionally, catalyzes a salvage reaction resulting in the formation of AMP, that is energically less costly than de novo synthesis. The chain is Adenine phosphoribosyltransferase from Thermoanaerobacter pseudethanolicus (strain ATCC 33223 / 39E) (Clostridium thermohydrosulfuricum).